The sequence spans 591 residues: Formate--tetrahydrofolate ligase (591 aa).

ATP is bound at residue 74 to 81 (TPLGEGKS).

This sequence belongs to the formate--tetrahydrofolate ligase family.

The catalysed reaction is (6S)-5,6,7,8-tetrahydrofolate + formate + ATP = (6R)-10-formyltetrahydrofolate + ADP + phosphate. It participates in one-carbon metabolism; tetrahydrofolate interconversion. The sequence is that of Formate--tetrahydrofolate ligase from Lawsonia intracellularis (strain PHE/MN1-00).